A 439-amino-acid polypeptide reads, in one-letter code: Acyl-lipid (8-3)-desaturase (439 aa).

Residues 7–88 enclose the Cytochrome b5 heme-binding domain; it reads GRSAAREMTA…LPKLDASKVE (82 aa). The heme site is built by histidine 40 and histidine 66. Residues 123–143 traverse the membrane as a helical segment; it reads IPHMIYRVVEIVALFALSFWL. A Histidine box-1 motif is present at residues 171 to 175; that stretch reads HEMGH. The Histidine box-2 signature appears at 208-213; it reads HSKHHA. 3 consecutive transmembrane segments (helical) span residues 254 to 274, 287 to 307, and 312 to 332; these read AYLF…LYLH, FVWI…LGYS, and VGMY…QFAV. The Histidine box-3 motif lies at 376–380; it reads QIEHH.

The protein belongs to the fatty acid desaturase type 1 family. Fe(2+) serves as cofactor.

It is found in the membrane. The enzyme catalyses an (8Z,11Z,14Z)-icosatrienoyl-containing glycerolipid + 2 Fe(II)-[cytochrome b5] + O2 + 2 H(+) = (5Z,8Z,11Z,14Z)-eicosatetraenoyl-containing glycerolipid + 2 Fe(III)-[cytochrome b5] + 2 H2O. It catalyses the reaction an (8Z,11Z,14Z,17Z)-eicosatetraenoyl-containing glycerolipid + 2 Fe(II)-[cytochrome b5] + O2 + 2 H(+) = a (5Z,8Z,11Z,14Z,17Z)-eicosapentaenoyl-containing glycerolipid + 2 Fe(III)-[cytochrome b5] + 2 H2O. Its function is as follows. Fatty acid desaturase that introduces a cis double bond at the 5-position in 20-carbon polyunsaturated fatty acids incorporated in a glycerolipid that contain a Delta(8) double bond. This is Acyl-lipid (8-3)-desaturase from Thraustochytrium sp.